The following is a 274-amino-acid chain: Phosphatidylglycerol--prolipoprotein diacylglyceryl transferase (274 aa).

7 helical membrane passes run 22-42 (LSVR…MWLA), 61-81 (LLFY…VLFY), 96-116 (IWTG…AMVW), 125-145 (FFTV…VGRI), 177-197 (SQLY…NLFW), 204-224 (GAIS…VEFV), and 238-258 (ISMG…MIWV). Arginine 144 serves as a coordination point for a 1,2-diacyl-sn-glycero-3-phospho-(1'-sn-glycerol).

The protein belongs to the Lgt family.

The protein localises to the cell inner membrane. The enzyme catalyses L-cysteinyl-[prolipoprotein] + a 1,2-diacyl-sn-glycero-3-phospho-(1'-sn-glycerol) = an S-1,2-diacyl-sn-glyceryl-L-cysteinyl-[prolipoprotein] + sn-glycerol 1-phosphate + H(+). It participates in protein modification; lipoprotein biosynthesis (diacylglyceryl transfer). Its function is as follows. Catalyzes the transfer of the diacylglyceryl group from phosphatidylglycerol to the sulfhydryl group of the N-terminal cysteine of a prolipoprotein, the first step in the formation of mature lipoproteins. The sequence is that of Phosphatidylglycerol--prolipoprotein diacylglyceryl transferase from Aeromonas hydrophila subsp. hydrophila (strain ATCC 7966 / DSM 30187 / BCRC 13018 / CCUG 14551 / JCM 1027 / KCTC 2358 / NCIMB 9240 / NCTC 8049).